Reading from the N-terminus, the 1453-residue chain is Collagen alpha-1(I) chain (1453 aa).

An N-terminal signal peptide occupies residues M1–G22. A propeptide spans Q23 to S151 (N-terminal propeptide). One can recognise a VWFC domain in the interval V29 to P87. A glycan (N-linked (GlcNAc...) asparagine) is linked at N56. Residues V97–R1206 form a disordered region. Pro residues-rich tracts occupy residues P109–P118 and P128–P143. Q152 is modified (pyrrolidone carboxylic acid). The nonhelical region (N-terminal) stretch occupies residues Q152–P167. An Allysine modification is found at K160. Residue S161 is modified to Phosphoserine. Residues G168–P1181 are triple-helical region. A 4-hydroxyproline mark is found at P179, P182, P185, P194, P197, P200, P215, P230, P236, P245, and P251. Positions P187–M206 are enriched in low complexity. A compositionally biased stretch (basic and acidic residues) spans N218–E232. At K254 the chain carries 5-hydroxylysine; alternate. A glycan (O-linked (Gal...) hydroxylysine; alternate) is linked at K254. At S260 the chain carries Phosphoserine. 4-hydroxyproline is present on residues P278, P281, P287, P296, and P302. A compositionally biased stretch (low complexity) spans S307–A320. The segment covering P322–F334 has biased composition (pro residues). 11 positions are modified to 4-hydroxyproline: P323, P332, P335, P362, P365, P377, P383, P392, P398, P401, and P416. Residues P335–E361 are compositionally biased toward low complexity. Residues A368 to P418 are compositionally biased toward low complexity. K419 carries the 5-hydroxylysine modification. 4-hydroxyproline is present on residues P425, P428, P440, P449, P464, P470, P479, and P485. Residues G474 to G483 are compositionally biased toward gly residues. K494 is modified (5-hydroxylysine). Residues P503, P512, P518, P524, P533, P536, P545, P554, P560, P572, P581, P590, P593, P611, P629, P635, P641, P647, P653, P659, P671, P680, P692, P704, P707, P713, P719, and P728 each carry the 4-hydroxyproline modification. The segment covering K527–A566 has biased composition (low complexity). A compositionally biased stretch (low complexity) spans Q623–Q650. 2 stretches are compositionally biased toward low complexity: residues P685–D695 and A703–Q716. The short motif at R734–D736 is the Cell attachment site element. The residue at position 740 (K740) is a 5-hydroxylysine. A 4-hydroxyproline mark is found at P746, P761, and P767. A compositionally biased stretch (low complexity) spans T773–A787. S776 carries the phosphoserine modification. Residues P788, P794, P797, P806, P812, P830, P839, and P848 each carry the 4-hydroxyproline modification. Residues A800–K815 show a composition bias toward low complexity. Over residues P829–P841 the composition is skewed to pro residues. Over residues I842 to V872 the composition is skewed to low complexity. K851 carries the post-translational modification 5-hydroxylysine. 4-hydroxyproline is present on residues P860 and P866. P874 carries the 3-hydroxyproline modification. 4-hydroxyproline is present on residues P875, P884, P887, P908, P917, P926, P935, P953, P962, P965, P971, P986, P992, P998, P1007, and P1013. The segment covering E901–E910 has biased composition (low complexity). Low complexity predominate over residues A920–P935. Pro residues predominate over residues P985–A995. Low complexity predominate over residues P997–S1012. Residue K1022 is modified to 5-hydroxylysine. Positions A1031–V1046 are enriched in pro residues. P1034, P1037, and P1040 each carry 4-hydroxyproline. Over residues I1067–P1081 the composition is skewed to low complexity. The Cell attachment site motif lies at R1082–D1084. The segment covering R1082–I1096 has biased composition (basic and acidic residues). K1085 bears the 5-hydroxylysine mark. Position 1097 is a 5-hydroxylysine; alternate (K1097). O-linked (Gal...) hydroxylysine; alternate glycosylation occurs at K1097. Positions F1102 to P1148 are enriched in low complexity. 5 positions are modified to 4-hydroxyproline: P1109, P1112, P1115, P1133, and P1148. Residue P1153 is modified to 3-hydroxyproline. The residue at position 1154 (P1154) is a 4-hydroxyproline. Pro residues predominate over residues A1166–P1181. Residue P1168 is modified to 3-hydroxyproline. P1169 carries the post-translational modification 4-hydroxyproline. A 3-hydroxyproline modification is found at P1171. At P1172 the chain carries 4-hydroxyproline. P1174 carries the post-translational modification 3-hydroxyproline. 4-hydroxyproline is present on residues P1175, P1178, and P1181. A major antigenic determinant (of neutral salt-extracted rat skin collagen) region spans residues G1176–D1186. The segment at S1182 to A1207 is nonhelical region (C-terminal). Residue K1197 is modified to Allysine. The span at K1197–R1206 shows a compositional bias: basic and acidic residues. Residues D1208 to V1453 constitute a propeptide, C-terminal propeptide. Residues L1218 to V1453 form the Fibrillar collagen NC1 domain. Disulfide bonds link C1248–C1280, C1288–C1451, and C1359–C1404. The Ca(2+) site is built by D1266, N1268, Q1269, C1271, and D1274. N1354 carries N-linked (GlcNAc...) asparagine glycosylation.

This sequence belongs to the fibrillar collagen family. In terms of assembly, trimers of one alpha 2(I) and two alpha 1(I) chains. Interacts with MRC2. Interacts with TRAM2. Interacts with MFAP4 in a Ca (2+)-dependent manner. Post-translationally, contains mostly 4-hydroxyproline. Proline residues at the third position of the tripeptide repeating unit (G-X-Y) are hydroxylated in some or all of the chains. In terms of processing, contains 3-hydroxyproline at a few sites. This modification occurs on the first proline residue in the sequence motif Gly-Pro-Hyp, where Hyp is 4-hydroxyproline. Lysine residues at the third position of the tripeptide repeating unit (G-X-Y) are 5-hydroxylated in some or all of the chains. Post-translationally, O-glycosylated on hydroxylated lysine residues. The O-linked glycan consists of a Glc-Gal disaccharide. As to expression, forms the fibrils of tendon, ligaments and bones. In bones the fibrils are mineralized with calcium hydroxyapatite.

The protein resides in the secreted. It is found in the extracellular space. The protein localises to the extracellular matrix. Its function is as follows. Type I collagen is a member of group I collagen (fibrillar forming collagen). In Rattus norvegicus (Rat), this protein is Collagen alpha-1(I) chain (Col1a1).